Consider the following 195-residue polypeptide: FMN-dependent NADH:quinone oxidoreductase (195 aa).

Residues serine 10, 16–18 (SQS), and 91–94 (MYNF) each bind FMN.

This sequence belongs to the azoreductase type 1 family. Homodimer. FMN serves as cofactor.

The catalysed reaction is 2 a quinone + NADH + H(+) = 2 a 1,4-benzosemiquinone + NAD(+). It catalyses the reaction N,N-dimethyl-1,4-phenylenediamine + anthranilate + 2 NAD(+) = 2-(4-dimethylaminophenyl)diazenylbenzoate + 2 NADH + 2 H(+). Its function is as follows. Quinone reductase that provides resistance to thiol-specific stress caused by electrophilic quinones. Functionally, also exhibits azoreductase activity. Catalyzes the reductive cleavage of the azo bond in aromatic azo compounds to the corresponding amines. The chain is FMN-dependent NADH:quinone oxidoreductase from Aeromonas salmonicida (strain A449).